The sequence spans 186 residues: MISSNDFRTGTTIEIDGQVWRVVEFLHVKPGKGSAFVRTKLKSVRNGNVVEKTFRAGESVQQAVLEKSNLQHTYVESGDYVFMDMISFEETRLSSDQIGRGSKYLKEGMEVNVIFYKDKVLEVELPISITLKVTETDPGVKGDTASGGTKPAILETGAQVMVPLFISVGEMIKVDTRNDSYLGRDN.

The protein belongs to the elongation factor P family.

The protein resides in the cytoplasm. The protein operates within protein biosynthesis; polypeptide chain elongation. Its function is as follows. Involved in peptide bond synthesis. Stimulates efficient translation and peptide-bond synthesis on native or reconstituted 70S ribosomes in vitro. Probably functions indirectly by altering the affinity of the ribosome for aminoacyl-tRNA, thus increasing their reactivity as acceptors for peptidyl transferase. This Prochlorococcus marinus subsp. pastoris (strain CCMP1986 / NIES-2087 / MED4) protein is Elongation factor P.